A 552-amino-acid chain; its full sequence is MIMFCVQCEQTIRTPAGNGCSYAQGMCGKTAETSDLQDLLIAALQGLSAWAVKACEYGIINHDVDSFAPRAFFSTLTNVNFDSPRIVGYAREAIALREALKAQCLAVDANARVDNPMADLQLVSDDLGELQRQAAEFTPNKDKAAIGENILGLRLLCLYGLKGAAAYMEHAHVLGQYDNDIYAQYHKIMAWLGTWPADMNALLECSMEIGQMNFKVMSILDAGETGKYGHPTPTQVNVKATAGKCILISGHDLKDLYNLLEQTEGTGVNVYTHGEMLPAHGYPELRKFKHLVGNYGSGWQNQQVEFARFPGPIVMTSNCIIDPTVGAYDDRIWTRSIVGWPGVRHLDGDDFSAVITQAQQMAGFPYSEIPHLITVGFGRQTLLGAADTLIDLVSREKLRHIFLLGGCDGARGERHYFTDFATSVPDDCLILTLACGKYRFNKLEFGDIEGLPRLVDAGQCNDAYSAIILAVTLAEKLGCGVNDLPLSLVLSWFEQKAIVILLTLLSLGVKNIVTGPTAPGFLTPDLLAVLNEKFGLRSITTVEEDMKQLLSA.

Residues Cys-5, Cys-8, Cys-20, and Cys-27 each contribute to the [2Fe-2S] cluster site. 8 residues coordinate hybrid [4Fe-2O-2S] cluster: His-251, Glu-275, Cys-319, Cys-407, Cys-435, Cys-460, Glu-494, and Lys-496. Cys-407 carries the post-translational modification Cysteine persulfide.

The protein belongs to the HCP family. The cofactor is [2Fe-2S] cluster. Hybrid [4Fe-2O-2S] cluster serves as cofactor.

Its subcellular location is the cytoplasm. The enzyme catalyses A + NH4(+) + H2O = hydroxylamine + AH2 + H(+). In terms of biological role, catalyzes the reduction of hydroxylamine to form NH(3) and H(2)O. This is Hydroxylamine reductase from Shigella sonnei (strain Ss046).